A 170-amino-acid polypeptide reads, in one-letter code: Protein FAM209 (170 aa).

The first 20 residues, 1–20, serve as a signal peptide directing secretion; it reads MRTLLRWCLFLSLCVSCACA. A helical transmembrane segment spans residues 56–76; sequence WLGNKWLWLFVAIMIYVMLKF. The segment at 83–107 is disordered; it reads KEQHPPGLRGCQLRSPPKKAQNISP.

As to quaternary structure, interacts with DPY19L2. Interacts with CYLC1; the interaction may be relevant for proper acrosome attachment to the nuclear envelope. In terms of tissue distribution, predominately expressed in testis.

It localises to the nucleus inner membrane. Required for sperm acrosome biogenesis. This chain is Protein FAM209, found in Mus musculus (Mouse).